A 689-amino-acid polypeptide reads, in one-letter code: Glycine--tRNA ligase beta subunit (689 aa).

This sequence belongs to the class-II aminoacyl-tRNA synthetase family. As to quaternary structure, tetramer of two alpha and two beta subunits.

It localises to the cytoplasm. It catalyses the reaction tRNA(Gly) + glycine + ATP = glycyl-tRNA(Gly) + AMP + diphosphate. The protein is Glycine--tRNA ligase beta subunit of Coxiella burnetii (strain Dugway 5J108-111).